Reading from the N-terminus, the 310-residue chain is tRNA uridine(34) hydroxylase (310 aa).

A Rhodanese domain is found at 124–218 (SDPEVLLIDT…YFEEVPQEES (95 aa)). The active-site Cysteine persulfide intermediate is the Cys178.

It belongs to the TrhO family.

The enzyme catalyses uridine(34) in tRNA + AH2 + O2 = 5-hydroxyuridine(34) in tRNA + A + H2O. Catalyzes oxygen-dependent 5-hydroxyuridine (ho5U) modification at position 34 in tRNAs. The chain is tRNA uridine(34) hydroxylase from Pseudomonas putida (strain ATCC 47054 / DSM 6125 / CFBP 8728 / NCIMB 11950 / KT2440).